A 445-amino-acid polypeptide reads, in one-letter code: MSEMTLNAAEQPIDELVGWVKQHDFSLNLTTERLAFLIAIAVLSNERFDEELGEGELHDAFAIVTRLFDETGEASAFRANNAINEMVKQRLISRFVSEITDGASIYRLSPLAIGITDYYVRHREFSRLRLSIQLSMVADEMAKAIEAAQKGGTPGHWKKNVYGVLKYSVGEIFDQIDLNQRVMDEQQQSVKQQIADLLNKDWREAINNCEALLSETSSTLRELQDTLQAASDELQTQILDIQEIVYGDPELEFIEEALFGLQMKLDRITSWGQQAIDLWIGYDRHVHKFIRTAIDMDKNRAFSSRLRQSIKDYFDMPWYLTFADAERLSDLRDEALVLRDDEVTGQVPMEVEYEEFQQVNDELSERIGDMLKAHKEQGTPIDLSVVLRDYLAQHPYTHHFDLARIIVDQAVRLGYSESDYQAIQPDWKAINEFGAKVQANVIDRY.

Positions 213–241 (LSETSSTLRELQDTLQAASDELQTQILDI) are leucine-zipper.

The protein belongs to the MukF family. Interacts, and probably forms a ternary complex, with MukE and MukB via its C-terminal region. The complex formation is stimulated by calcium or magnesium. It is required for an interaction between MukE and MukB.

Its subcellular location is the cytoplasm. It is found in the nucleoid. Involved in chromosome condensation, segregation and cell cycle progression. May participate in facilitating chromosome segregation by condensation DNA from both sides of a centrally located replisome during cell division. Not required for mini-F plasmid partitioning. Probably acts via its interaction with MukB and MukE. Overexpression results in anucleate cells. It has a calcium binding activity. The protein is Chromosome partition protein MukF of Vibrio parahaemolyticus serotype O3:K6 (strain RIMD 2210633).